Reading from the N-terminus, the 320-residue chain is 1-aminocyclopropane-1-carboxylate oxidase (320 aa).

The region spanning 154 to 254 is the Fe2OG dioxygenase domain; it reads PTFGTKVSNY…RMSLASFYNP (101 aa). 3 residues coordinate Fe cation: histidine 178, aspartate 180, and histidine 235.

Belongs to the iron/ascorbate-dependent oxidoreductase family. It depends on Fe cation as a cofactor.

The enzyme catalyses 1-aminocyclopropane-1-carboxylate + L-ascorbate + O2 = ethene + L-dehydroascorbate + hydrogen cyanide + CO2 + 2 H2O. It participates in alkene biosynthesis; ethylene biosynthesis via S-adenosyl-L-methionine; ethylene from S-adenosyl-L-methionine: step 2/2. In Persea americana (Avocado), this protein is 1-aminocyclopropane-1-carboxylate oxidase (ACO).